A 94-amino-acid polypeptide reads, in one-letter code: Pyrimidine/purine nucleoside phosphorylase (94 aa).

It belongs to the nucleoside phosphorylase PpnP family.

It catalyses the reaction a purine D-ribonucleoside + phosphate = a purine nucleobase + alpha-D-ribose 1-phosphate. The catalysed reaction is adenosine + phosphate = alpha-D-ribose 1-phosphate + adenine. It carries out the reaction cytidine + phosphate = cytosine + alpha-D-ribose 1-phosphate. The enzyme catalyses guanosine + phosphate = alpha-D-ribose 1-phosphate + guanine. It catalyses the reaction inosine + phosphate = alpha-D-ribose 1-phosphate + hypoxanthine. The catalysed reaction is thymidine + phosphate = 2-deoxy-alpha-D-ribose 1-phosphate + thymine. It carries out the reaction uridine + phosphate = alpha-D-ribose 1-phosphate + uracil. The enzyme catalyses xanthosine + phosphate = alpha-D-ribose 1-phosphate + xanthine. Catalyzes the phosphorolysis of diverse nucleosides, yielding D-ribose 1-phosphate and the respective free bases. Can use uridine, adenosine, guanosine, cytidine, thymidine, inosine and xanthosine as substrates. Also catalyzes the reverse reactions. The protein is Pyrimidine/purine nucleoside phosphorylase of Aeromonas hydrophila subsp. hydrophila (strain ATCC 7966 / DSM 30187 / BCRC 13018 / CCUG 14551 / JCM 1027 / KCTC 2358 / NCIMB 9240 / NCTC 8049).